A 110-amino-acid polypeptide reads, in one-letter code: MDKKDLFDVFDGFSQNLMETLAEAEALKKQVQDLVEQNASLRLENDKLRDRLSHFSQMEESDPSSKAISSRKENLENIYEDGFHICTFFYGQRRENNEDCAFCMELLYRE.

Residues His-84, Cys-86, Cys-100, and Cys-103 each coordinate Zn(2+).

It belongs to the YabA family. Homotetramer. Interacts with both DnaA and DnaN, acting as a bridge between these two proteins. The cofactor is Zn(2+).

Its subcellular location is the cytoplasm. The protein resides in the nucleoid. Its function is as follows. Involved in control of chromosome replication initiation. Inhibits the cooperative binding of DnaA to the oriC region, thus negatively regulating initiation of chromosome replication. Inhibits the ability of DnaA-ATP to form a helix on DNA; does not disassemble preformed DnaA-DNA helices. Decreases the residence time of DnaA on the chromosome at its binding sites (oriC, replication forks and promoter-binding sites). Tethers DnaA to the replication machinery via the DNA polymerase beta sliding clamp subunit (dnaN). Associates with oriC and other DnaA targets on the chromosome in a DnaA-dependent manner. This chain is Replication initiation control protein YabA, found in Streptococcus mutans serotype c (strain ATCC 700610 / UA159).